A 759-amino-acid polypeptide reads, in one-letter code: 5-methyltetrahydropteroyltriglutamate--homocysteine methyltransferase (759 aa).

The span at 1 to 16 shows a compositional bias: polar residues; sequence MTQPVRRQPFTATITG. The segment at 1–22 is disordered; the sequence is MTQPVRRQPFTATITGSPRIGP. 5-methyltetrahydropteroyltri-L-glutamate contacts are provided by residues 24-27 and Lys-118; that span reads RELK. L-homocysteine contacts are provided by residues 437–439 and Glu-490; that span reads IGS. Residues 437 to 439 and Glu-490 contribute to the L-methionine site; that span reads IGS. Residues 521 to 522 and Trp-567 contribute to the 5-methyltetrahydropteroyltri-L-glutamate site; that span reads RC. Position 605 (Asp-605) interacts with L-homocysteine. Asp-605 is an L-methionine binding site. Glu-611 serves as a coordination point for 5-methyltetrahydropteroyltri-L-glutamate. The Zn(2+) site is built by His-647, Cys-649, and Glu-671. Catalysis depends on His-700, which acts as the Proton donor. Cys-732 is a Zn(2+) binding site.

Belongs to the vitamin-B12 independent methionine synthase family. It depends on Zn(2+) as a cofactor.

It carries out the reaction 5-methyltetrahydropteroyltri-L-glutamate + L-homocysteine = tetrahydropteroyltri-L-glutamate + L-methionine. Its pathway is amino-acid biosynthesis; L-methionine biosynthesis via de novo pathway; L-methionine from L-homocysteine (MetE route): step 1/1. In terms of biological role, catalyzes the transfer of a methyl group from 5-methyltetrahydrofolate to homocysteine resulting in methionine formation. This Mycobacterium tuberculosis (strain ATCC 25177 / H37Ra) protein is 5-methyltetrahydropteroyltriglutamate--homocysteine methyltransferase.